A 436-amino-acid polypeptide reads, in one-letter code: G2/mitotic-specific cyclin-B (436 aa).

Residues 1–17 show a composition bias toward polar residues; it reads MSTINNPLNIKTRSHSS. A disordered region spans residues 1–33; it reads MSTINNPLNIKTRSHSSMGGGMIMDENKVPKSS.

It belongs to the cyclin family. Cyclin AB subfamily. As to quaternary structure, interacts with the cdk1 protein kinase to form a serine/threonine kinase holoenzyme complex also known as maturation promoting factor (MPF). The cyclin subunit imparts substrate specificity to the complex.

Its function is as follows. Essential for the control of the cell cycle at the G2/M (mitosis) transition. This Dictyostelium discoideum (Social amoeba) protein is G2/mitotic-specific cyclin-B (cycB).